Here is a 254-residue protein sequence, read N- to C-terminus: MTLAKRIVPALDIKNGRVVKGVNFVNLREVGDPVESAKAYQAAGADELVFLDITATLEERDTIMSVVDAVSREVFIPLTVGGGIRTTEDMGRLIKAGADKIFVNSEAVKNPALITDGAKIFGSQAIVGAIDAKWDESAGIYRVYVSGGSKPTSLDAIEWAFELVARGAGELLVTSMDADGTKKGYDIQLYDQLADAVNVPVVASGGAGSTQDFVNLFEKTKIDAALAASVFHFGEIKIPNLKRTLKDDGVEIRI.

Residues Asp12 and Asp131 contribute to the active site.

The protein belongs to the HisA/HisF family. Heterodimer of HisH and HisF.

The protein resides in the cytoplasm. It carries out the reaction 5-[(5-phospho-1-deoxy-D-ribulos-1-ylimino)methylamino]-1-(5-phospho-beta-D-ribosyl)imidazole-4-carboxamide + L-glutamine = D-erythro-1-(imidazol-4-yl)glycerol 3-phosphate + 5-amino-1-(5-phospho-beta-D-ribosyl)imidazole-4-carboxamide + L-glutamate + H(+). Its pathway is amino-acid biosynthesis; L-histidine biosynthesis; L-histidine from 5-phospho-alpha-D-ribose 1-diphosphate: step 5/9. Its function is as follows. IGPS catalyzes the conversion of PRFAR and glutamine to IGP, AICAR and glutamate. The HisF subunit catalyzes the cyclization activity that produces IGP and AICAR from PRFAR using the ammonia provided by the HisH subunit. This Leuconostoc mesenteroides subsp. mesenteroides (strain ATCC 8293 / DSM 20343 / BCRC 11652 / CCM 1803 / JCM 6124 / NCDO 523 / NBRC 100496 / NCIMB 8023 / NCTC 12954 / NRRL B-1118 / 37Y) protein is Imidazole glycerol phosphate synthase subunit HisF.